The chain runs to 714 residues: Cadherin-13 (714 aa).

The first 22 residues, 1–22, serve as a signal peptide directing secretion; the sequence is MQPRTPLTLCVLLSQVLLVTSA. The propeptide occupies 23–138; sequence DDLECTPGFQ…RTSPVPRQKR (116 aa). 5 consecutive Cadherin domains span residues 143-245, 246-363, 364-477, 478-585, and 586-680; these read SPIL…RPIF, REGP…SPKF, TKKE…GPVF, YPDP…APVI, and YPTV…VQVC. A disordered region spans residues 156–183; the sequence is PRDVGKVVDSDRPEGSKFRLTGKGVDQD. A compositionally biased stretch (basic and acidic residues) spans 158-172; that stretch reads DVGKVVDSDRPEGSK. 7 N-linked (GlcNAc...) asparagine glycosylation sites follow: Asn382, Asn489, Asn500, Asn530, Asn598, Asn638, and Asn671. Gly693 is lipidated: GPI-anchor amidated glycine. The propeptide at 694 to 714 is removed in mature form; the sequence is ALHLSLSLLLLFSLLSLLSGL.

In terms of assembly, by contrast to classical cadherins, homodimerization in trans is not mediated by cadherin EC1 domain strand-swapping, but instead through a homophilic adhesive interface which joins two elongated EC1-EC2 domains through a region near their Ca2+-binding sites to form a tetrahedral, X-like shape.

Its subcellular location is the cell membrane. It localises to the cytoplasm. Functionally, cadherins are calcium-dependent cell adhesion proteins. They preferentially interact with themselves in a homophilic manner in connecting cells; cadherins may thus contribute to the sorting of heterogeneous cell types. May act as a negative regulator of neural cell growth. The chain is Cadherin-13 (Cdh13) from Mus musculus (Mouse).